We begin with the raw amino-acid sequence, 452 residues long: MKGSASESPSASVAEATTTDVQVTPTALLQLDREQIRKAVEVISNRSKSKKNNNELLLSGSENLFLMVILWKIPEKELRVKVPLPHSILSESSDVCLFTKDEFDSPEQTEGFYKKLLKKHGVNTISQIIPFKTLKTEYKAYEAKLRLLGSFEVFITDARIRRHLPSHIGRHFYQRKKVPVSVNLLAKNLSKEINRCITGTVLNISKRGSCSTIRIGHTGMETEHIVDNILAVSEMLSEKLPEKWQSVKLLFLKTEKSVSLPIFSSFVTSQDENAVSLRSLRKQELKKRKRENAKLKKESKMLRKKSKKATSLLTQSGLASSAPAKSPGAQKKKTNKAHKKQKVTEECEEAIPQLVPIGETPDKENVKMQENITGKTPKSKSDPSTPKGKKRKALLATETPEASAPGTSGKKQKKDVQEFRKPEASSFSTPRKSGKKASNTPRDKKTKAAHSN.

M1 carries the post-translational modification N-acetylmethionine. Glycyl lysine isopeptide (Lys-Gly) (interchain with G-Cter in SUMO2) cross-links involve residues K119 and K253. A coiled-coil region spans residues L277–A350. Residues Q283–N452 are disordered. The segment covering N292–M301 has biased composition (basic and acidic residues). Polar residues predominate over residues A309–A319. Basic residues predominate over residues Q330–Q341. T334, T344, T360, T399, and T407 each carry phosphothreonine. The segment covering K414 to E423 has biased composition (basic and acidic residues). A compositionally biased stretch (polar residues) spans S425–T440. At T429 the chain carries Phosphothreonine. The residue at position 432 (K432) is an N6-acetyllysine. Position 433 is a phosphoserine (S433).

This sequence belongs to the universal ribosomal protein uL1 family. Highly divergent. In terms of assembly, interacts with ING1. Interacts with KPNA7 and KPNA2.

It is found in the nucleus. The protein resides in the nucleolus. Functionally, regulates cellular senescence through inhibition of PTEN translation. Acts as a pro-apoptotic regulator in response to DNA damage. The polypeptide is Ribosomal L1 domain-containing protein 1 (Mus musculus (Mouse)).